The chain runs to 84 residues: RNA-binding protein Hfq (84 aa).

Residues Asp11–Val71 form the Sm domain.

The protein belongs to the Hfq family. Homohexamer.

Its function is as follows. RNA chaperone that binds small regulatory RNA (sRNAs) and mRNAs to facilitate mRNA translational regulation in response to envelope stress, environmental stress and changes in metabolite concentrations. Also binds with high specificity to tRNAs. The polypeptide is RNA-binding protein Hfq (Methylobacterium nodulans (strain LMG 21967 / CNCM I-2342 / ORS 2060)).